The primary structure comprises 374 residues: tRNA-specific 2-thiouridylase MnmA (374 aa).

Residues G16 to S23 and M42 contribute to the ATP site. An interaction with target base in tRNA region spans residues N102–D104. C107 functions as the Nucleophile in the catalytic mechanism. A disulfide bridge connects residues C107 and C203. An ATP-binding site is contributed by G131. An interaction with tRNA region spans residues K153–Q155. C203 (cysteine persulfide intermediate) is an active-site residue. Residues R311 to Y312 are interaction with tRNA.

It belongs to the MnmA/TRMU family.

The protein localises to the cytoplasm. It carries out the reaction S-sulfanyl-L-cysteinyl-[protein] + uridine(34) in tRNA + AH2 + ATP = 2-thiouridine(34) in tRNA + L-cysteinyl-[protein] + A + AMP + diphosphate + H(+). Its function is as follows. Catalyzes the 2-thiolation of uridine at the wobble position (U34) of tRNA, leading to the formation of s(2)U34. The polypeptide is tRNA-specific 2-thiouridylase MnmA (Exiguobacterium sibiricum (strain DSM 17290 / CCUG 55495 / CIP 109462 / JCM 13490 / 255-15)).